The chain runs to 514 residues: Glutamyl-tRNA(Gln) amidotransferase subunit B, mitochondrial (514 aa).

It belongs to the GatB/GatE family. GatB subfamily. As to quaternary structure, subunit of the heterotrimeric GatCAB amidotransferase (AdT) complex, composed of A, B and C subunits.

It localises to the mitochondrion. It carries out the reaction L-glutamyl-tRNA(Gln) + L-glutamine + ATP + H2O = L-glutaminyl-tRNA(Gln) + L-glutamate + ADP + phosphate + H(+). In terms of biological role, allows the formation of correctly charged Gln-tRNA(Gln) through the transamidation of misacylated Glu-tRNA(Gln) in the mitochondria. The reaction takes place in the presence of glutamine and ATP through an activated gamma-phospho-Glu-tRNA(Gln). The polypeptide is Glutamyl-tRNA(Gln) amidotransferase subunit B, mitochondrial (Naegleria gruberi (Amoeba)).